Reading from the N-terminus, the 364-residue chain is Fructose-bisphosphate aldolase B (364 aa).

N-acetylalanine is present on Ala-2. N6-succinyllysine is present on Lys-13. Ser-36 carries the post-translational modification Phosphoserine. At Thr-39 the chain carries Phosphothreonine. A beta-D-fructose 1,6-bisphosphate-binding site is contributed by Arg-43. Residue Thr-119 is modified to Phosphothreonine. Lys-121 is modified (N6-succinyllysine). Ser-132 bears the Phosphoserine mark. Residue Glu-188 is the Proton acceptor of the active site. Lys-230 serves as the catalytic Schiff-base intermediate with dihydroxyacetone-P. Phosphoserine occurs at positions 272, 276, 299, and 301. Beta-D-fructose 1,6-bisphosphate is bound at residue Ser-272–Gly-274. Residue Arg-304 coordinates beta-D-fructose 1,6-bisphosphate. A Phosphoserine modification is found at Ser-309. At Lys-317 the chain carries N6-succinyllysine.

Belongs to the class I fructose-bisphosphate aldolase family. As to quaternary structure, homotetramer. Interacts with BBS1, BBS2, BBS4 and BBS7. Forms a ternary complex with G6PD and TP53; this interaction is direct.

The protein localises to the cytoplasm. It is found in the cytosol. The protein resides in the cytoskeleton. It localises to the microtubule organizing center. Its subcellular location is the centrosome. The protein localises to the centriolar satellite. It catalyses the reaction beta-D-fructose 1,6-bisphosphate = D-glyceraldehyde 3-phosphate + dihydroxyacetone phosphate. The catalysed reaction is beta-D-fructose 1-phosphate = D-glyceraldehyde + dihydroxyacetone phosphate. It participates in carbohydrate degradation; glycolysis; D-glyceraldehyde 3-phosphate and glycerone phosphate from D-glucose: step 4/4. The protein operates within carbohydrate biosynthesis; gluconeogenesis. It functions in the pathway carbohydrate metabolism; fructose metabolism. Catalyzes the aldol cleavage of fructose 1,6-biphosphate to form two triosephosphates dihydroxyacetone phosphate and D-glyceraldehyde 3-phosphate in glycolysis as well as the reverse stereospecific aldol addition reaction in gluconeogenesis. In fructolysis, metabolizes fructose 1-phosphate derived from the phosphorylation of dietary fructose by fructokinase into dihydroxyacetone phosphate and D-glyceraldehyde. Acts as an adapter independently of its enzymatic activity, exerts a tumor suppressor role by stabilizing the ternary complex with G6PD and TP53 to inhibit G6PD activity and keep oxidative pentose phosphate metabolism in check. The polypeptide is Fructose-bisphosphate aldolase B (ALDOB) (Ovis aries (Sheep)).